The primary structure comprises 210 residues: Insulin receptor (210 aa).

In terms of domain architecture, Fibronectin type-III spans 1–96 (VSNSSSQIIL…SQILKELEES (96 aa)). N-linked (GlcNAc...) asparagine glycans are attached at residues N3, N21, and N68. Positions 55 to 78 (WSPPFESEDSQKHNQSEYEDSAGE) are disordered. Residues 103-111 (EDYLHNVVF) form an insulin-binding region. A disordered region spans residues 116–169 (TSSGTGAEDPRPSRKRRSLGDVGNVTVAVPTVAAFPNTSSTSTPTSPEEHRPFE). Topologically, residues 133-210 (SLGDVGNVTV…EERCSVAAYV (78 aa)) are extracellular. Low complexity predominate over residues 137–161 (VGNVTVAVPTVAAFPNTSSTSTPTS). 2 N-linked (GlcNAc...) asparagine glycosylation sites follow: N139 and N152. Cysteines 195 and 204 form a disulfide.

The protein belongs to the protein kinase superfamily. Tyr protein kinase family. Insulin receptor subfamily. Tetramer of 2 alpha and 2 beta chains linked by disulfide bonds. The alpha chains carry the insulin-binding regions, while the beta chains carry the kinase domain. Forms a hybrid receptor with IGF1R, the hybrid is a tetramer consisting of 1 alpha chain and 1 beta chain of INSR and 1 alpha chain and 1 beta chain of IGF1R. Interacts with SORBS1 but dissociates from it following insulin stimulation. Binds SH2B2. Activated form of INSR interacts (via phosphorylated Tyrosine) with the PTB/PID domains of IRS1 and SHC1. The sequences surrounding the phosphorylated NPXY motif contribute differentially to either IRS1 or SHC1 recognition. Interacts (via tyrosines in the C-terminus) with IRS2 (via PTB domain and 591-786 AA); the 591-786 would be the primary anchor of IRS2 to INSR while the PTB domain would have a stabilizing action on the interaction with INSR. Interacts with the SH2 domains of the 85 kDa regulatory subunit of PI3K (PIK3R1) in vitro, when autophosphorylated on tyrosine residues. Interacts with SOCS7. Interacts with SOCS3. Interacts with SOCS1. Interacts with CAV2 (tyrosine-phosphorylated form); the interaction is increased with 'Tyr-27'phosphorylation of CAV2. Interacts with ARRB2. Interacts with GRB10; this interaction blocks the association between IRS1/IRS2 and INSR, significantly reduces insulin-stimulated tyrosine phosphorylation of IRS1 and IRS2 and thus decreases insulin signaling. Interacts with GRB7. Interacts with PDPK1. Interacts with GRB14 (via BPS domain). Interacts (via subunit alpha) with ENPP1 (via 485-599 AA); this interaction blocks autophosphorylation. Interacts with PTPRE. Interacts with STAT5B (via SH2 domain). Interacts with PTPRF. Interacts with ATIC; ATIC together with PRKAA2/AMPK2 and HACD3/PTPLAD1 is proposed to be part of a signaling netwok regulating INSR autophosphorylation and endocytosis. Interacts with the insulin receptor SORL1; this interaction strongly increases its surface exposure, hence strengthens insulin signal reception. Interacts (tyrosine phosphorylated) with CCDC88A/GIV (via SH2-like region); binding requires autophosphorylation of the INSR C-terminal region. Interacts with GNAI3; the interaction is probably mediated by CCDC88A/GIV. Interacts with LMBRD1. Interacts (in response to insulin stimulation) with NCK1; this interaction may recruit PTPN1 to mediate INSR dephosphorylation. In terms of processing, after being transported from the endoplasmic reticulum to the Golgi apparatus, the single glycosylated precursor is further glycosylated and then cleaved, followed by its transport to the plasma membrane. Autophosphorylated on tyrosine residues in response to insulin. Dephosphorylated by PTPN1, PTPRE and PTPRF. Dephosphorylated by PTPN2; down-regulates insulin-induced signaling. Post-translationally, S-nitrosylation by BLVRB inhibits the receptor tyrosine kinase, thereby inhibiting insulin signaling.

It is found in the cell membrane. The protein resides in the late endosome. The protein localises to the lysosome. The catalysed reaction is L-tyrosyl-[protein] + ATP = O-phospho-L-tyrosyl-[protein] + ADP + H(+). With respect to regulation, activated in response to insulin. Autophosphorylation activates the kinase activity. PTPN1, PTPRE and PTPRF dephosphorylate important tyrosine residues, thereby reducing INSR activity. Inhibited by ENPP1. GRB10 and GRB14 inhibit the catalytic activity of the INSR, they block access of substrates to the activated receptor. SOCS1 and SOCS3 act as negative regulators of INSR activity, they bind to the activated INRS and interfere with the phosphorylation of INSR substrates. In terms of biological role, receptor tyrosine kinase which mediates the pleiotropic actions of insulin. Binding of insulin leads to phosphorylation of several intracellular substrates, including, insulin receptor substrates (IRS1, 2, 3, 4), SHC, GAB1, CBL and other signaling intermediates. Each of these phosphorylated proteins serve as docking proteins for other signaling proteins that contain Src-homology-2 domains (SH2 domain) that specifically recognize different phosphotyrosine residues, including the p85 regulatory subunit of PI3K and SHP2. Phosphorylation of IRSs proteins lead to the activation of two main signaling pathways: the PI3K-AKT/PKB pathway, which is responsible for most of the metabolic actions of insulin, and the Ras-MAPK pathway, which regulates expression of some genes and cooperates with the PI3K pathway to control cell growth and differentiation. Binding of the SH2 domains of PI3K to phosphotyrosines on IRS1 leads to the activation of PI3K and the generation of phosphatidylinositol-(3, 4, 5)-triphosphate (PIP3), a lipid second messenger, which activates several PIP3-dependent serine/threonine kinases, such as PDPK1 and subsequently AKT/PKB. The net effect of this pathway is to produce a translocation of the glucose transporter SLC2A4/GLUT4 from cytoplasmic vesicles to the cell membrane to facilitate glucose transport. Moreover, upon insulin stimulation, activated AKT/PKB is responsible for: anti-apoptotic effect of insulin by inducing phosphorylation of BAD; regulates the expression of gluconeogenic and lipogenic enzymes by controlling the activity of the winged helix or forkhead (FOX) class of transcription factors. Another pathway regulated by PI3K-AKT/PKB activation is mTORC1 signaling pathway which regulates cell growth and metabolism and integrates signals from insulin. AKT mediates insulin-stimulated protein synthesis by phosphorylating TSC2 thereby activating mTORC1 pathway. The Ras/RAF/MAP2K/MAPK pathway is mainly involved in mediating cell growth, survival and cellular differentiation of insulin. Phosphorylated IRS1 recruits GRB2/SOS complex, which triggers the activation of the Ras/RAF/MAP2K/MAPK pathway. In addition to binding insulin, the insulin receptor can bind insulin-like growth factors (IGFI and IGFII). When present in a hybrid receptor with IGF1R, binds IGF1. In adipocytes, inhibits lipolysis. This is Insulin receptor (INSR) from Macaca mulatta (Rhesus macaque).